The primary structure comprises 308 residues: Limonin dehydrogenase (308 aa).

Belongs to the aldehyde dehydrogenase family.

The protein resides in the periplasm. Its activity is regulated as follows. Completely inhibited by HgCl(2), CoCl(2) and CaCl(2). Functionally, catalyzes the NAD(+)-dependent conversion of limonin. The sequence is that of Limonin dehydrogenase from Pseudomonas putida (Arthrobacter siderocapsulatus).